The chain runs to 356 residues: Phospho-2-dehydro-3-deoxyheptonate aldolase, Tyr-sensitive (356 aa).

Belongs to the class-I DAHP synthase family.

It catalyses the reaction D-erythrose 4-phosphate + phosphoenolpyruvate + H2O = 7-phospho-2-dehydro-3-deoxy-D-arabino-heptonate + phosphate. It functions in the pathway metabolic intermediate biosynthesis; chorismate biosynthesis; chorismate from D-erythrose 4-phosphate and phosphoenolpyruvate: step 1/7. Its function is as follows. Stereospecific condensation of phosphoenolpyruvate (PEP) and D-erythrose-4-phosphate (E4P) giving rise to 3-deoxy-D-arabino-heptulosonate-7-phosphate (DAHP). This chain is Phospho-2-dehydro-3-deoxyheptonate aldolase, Tyr-sensitive (aroF), found in Salmonella typhi.